A 210-amino-acid chain; its full sequence is Imidazoleglycerol-phosphate dehydratase (210 aa).

It belongs to the imidazoleglycerol-phosphate dehydratase family.

The protein resides in the cytoplasm. The enzyme catalyses D-erythro-1-(imidazol-4-yl)glycerol 3-phosphate = 3-(imidazol-4-yl)-2-oxopropyl phosphate + H2O. It functions in the pathway amino-acid biosynthesis; L-histidine biosynthesis; L-histidine from 5-phospho-alpha-D-ribose 1-diphosphate: step 6/9. This chain is Imidazoleglycerol-phosphate dehydratase, found in Mycobacterium bovis (strain ATCC BAA-935 / AF2122/97).